The chain runs to 357 residues: Peptide chain release factor 1 (357 aa).

Q234 is modified (N5-methylglutamine).

The protein belongs to the prokaryotic/mitochondrial release factor family. In terms of processing, methylated by PrmC. Methylation increases the termination efficiency of RF1.

The protein localises to the cytoplasm. Peptide chain release factor 1 directs the termination of translation in response to the peptide chain termination codons UAG and UAA. This is Peptide chain release factor 1 from Lactococcus lactis subsp. cremoris (strain SK11).